Here is a 515-residue protein sequence, read N- to C-terminus: Cytochrome P450 76C3 (515 aa).

The chain crosses the membrane as a helical span at residues leucine 5–alanine 25. Residue cysteine 451 coordinates heme.

The protein belongs to the cytochrome P450 family. Heme serves as cofactor.

The protein localises to the membrane. The sequence is that of Cytochrome P450 76C3 (CYP76C3) from Arabidopsis thaliana (Mouse-ear cress).